The primary structure comprises 153 residues: Large ribosomal subunit protein uL30 (153 aa).

It belongs to the universal ribosomal protein uL30 family. Part of the 50S ribosomal subunit.

The polypeptide is Large ribosomal subunit protein uL30 (Methanosarcina barkeri (strain Fusaro / DSM 804)).